We begin with the raw amino-acid sequence, 198 residues long: Endoribonuclease YbeY (198 aa).

Residues histidine 156, histidine 160, and histidine 166 each coordinate Zn(2+).

Belongs to the endoribonuclease YbeY family. It depends on Zn(2+) as a cofactor.

It is found in the cytoplasm. Its function is as follows. Single strand-specific metallo-endoribonuclease involved in late-stage 70S ribosome quality control and in maturation of the 3' terminus of the 16S rRNA. The chain is Endoribonuclease YbeY from Cupriavidus necator (strain ATCC 17699 / DSM 428 / KCTC 22496 / NCIMB 10442 / H16 / Stanier 337) (Ralstonia eutropha).